We begin with the raw amino-acid sequence, 284 residues long: Acetylglutamate kinase (284 aa).

Residues 64-65 (GG), arginine 86, and asparagine 179 contribute to the substrate site.

This sequence belongs to the acetylglutamate kinase family. ArgB subfamily.

The protein localises to the cytoplasm. It catalyses the reaction N-acetyl-L-glutamate + ATP = N-acetyl-L-glutamyl 5-phosphate + ADP. It functions in the pathway amino-acid biosynthesis; L-arginine biosynthesis; N(2)-acetyl-L-ornithine from L-glutamate: step 2/4. Its function is as follows. Catalyzes the ATP-dependent phosphorylation of N-acetyl-L-glutamate. This chain is Acetylglutamate kinase, found in Prochlorococcus marinus subsp. pastoris (strain CCMP1986 / NIES-2087 / MED4).